A 166-amino-acid chain; its full sequence is Small ribosomal subunit protein uS5 (166 aa).

The S5 DRBM domain occupies 12 to 75 (YIEKLVQVNR…EAARRNMIQV (64 aa)).

This sequence belongs to the universal ribosomal protein uS5 family. In terms of assembly, part of the 30S ribosomal subunit. Contacts proteins S4 and S8.

Its function is as follows. With S4 and S12 plays an important role in translational accuracy. Functionally, located at the back of the 30S subunit body where it stabilizes the conformation of the head with respect to the body. In Pseudomonas syringae pv. tomato (strain ATCC BAA-871 / DC3000), this protein is Small ribosomal subunit protein uS5.